The following is a 489-amino-acid chain: Rhamnulokinase (489 aa).

13-17 contacts ATP; that stretch reads ASSGR. An intrachain disulfide couples cysteine 68 to cysteine 222. Substrate contacts are provided by residues glycine 83 and 236-238; that span reads HDT. Aspartate 237 acts as the Proton acceptor in catalysis. ATP is bound at residue threonine 259. Substrate is bound at residue asparagine 296. Residue glutamine 304 coordinates ATP. A disulfide bridge connects residues cysteine 353 and cysteine 370. Glycine 402 is a binding site for ATP. The cysteines at positions 413 and 417 are disulfide-linked.

The protein belongs to the rhamnulokinase family. It depends on Mg(2+) as a cofactor.

It catalyses the reaction L-rhamnulose + ATP = L-rhamnulose 1-phosphate + ADP + H(+). It participates in carbohydrate degradation; L-rhamnose degradation; glycerone phosphate from L-rhamnose: step 2/3. Functionally, involved in the catabolism of L-rhamnose (6-deoxy-L-mannose). Catalyzes the transfer of the gamma-phosphate group from ATP to the 1-hydroxyl group of L-rhamnulose to yield L-rhamnulose 1-phosphate. This chain is Rhamnulokinase, found in Salmonella schwarzengrund (strain CVM19633).